Consider the following 58-residue polypeptide: Small ribosomal subunit protein bS21 (58 aa).

The tract at residues 27–58 (GVLSEARKHEHYEKPSVKRKKKSEAARKRKFK) is disordered. The segment covering 31–42 (EARKHEHYEKPS) has biased composition (basic and acidic residues). Over residues 43-58 (VKRKKKSEAARKRKFK) the composition is skewed to basic residues.

This sequence belongs to the bacterial ribosomal protein bS21 family.

In Desulfitobacterium hafniense (strain DSM 10664 / DCB-2), this protein is Small ribosomal subunit protein bS21.